Here is a 466-residue protein sequence, read N- to C-terminus: Adenosylhomocysteinase (466 aa).

The substrate site is built by threonine 57, aspartate 132, and glutamate 192. Residue threonine 193 to threonine 195 coordinates NAD(+). Substrate is bound by residues lysine 222 and aspartate 226. NAD(+) contacts are provided by residues asparagine 227, glycine 256–glycine 261, glutamate 279, asparagine 314, isoleucine 335–histidine 337, and asparagine 380.

This sequence belongs to the adenosylhomocysteinase family. The cofactor is NAD(+).

It is found in the cytoplasm. It carries out the reaction S-adenosyl-L-homocysteine + H2O = L-homocysteine + adenosine. The protein operates within amino-acid biosynthesis; L-homocysteine biosynthesis; L-homocysteine from S-adenosyl-L-homocysteine: step 1/1. May play a key role in the regulation of the intracellular concentration of adenosylhomocysteine. The sequence is that of Adenosylhomocysteinase from Chromobacterium violaceum (strain ATCC 12472 / DSM 30191 / JCM 1249 / CCUG 213 / NBRC 12614 / NCIMB 9131 / NCTC 9757 / MK).